The chain runs to 341 residues: Hypophosphite import ATP-binding protein HtxD (341 aa).

An ABC transporter domain is found at 6-249 (LQLKNVGKSY…RVHALYQVPA (244 aa)). An ATP-binding site is contributed by 38-45 (GTSGAGKS). The tract at residues 278–341 (IHTPHTRAAP…TGRGQDRGPG (64 aa)) is disordered. Composition is skewed to basic and acidic residues over residues 307–320 (ADRR…DRTT) and 327–341 (GGHD…RGPG).

It belongs to the ABC transporter superfamily. Phosphonates importer (TC 3.A.1.9.1) family. The complex is composed of two ATP-binding proteins (HtxD), two transmembrane proteins (HtxC and HtxE) and a solute-binding protein (HtxB).

The protein resides in the cell inner membrane. The enzyme catalyses phosphinate(out) + ATP + H2O = phosphinate(in) + ADP + phosphate + H(+). Functionally, part of the ABC transporter complex HtxBCDE involved in hypophosphite import. Responsible for energy coupling to the transport system. The polypeptide is Hypophosphite import ATP-binding protein HtxD (htxD) (Stutzerimonas stutzeri (Pseudomonas stutzeri)).